The following is a 120-amino-acid chain: U13-lycotoxin-Ls1f (120 aa).

An N-terminal signal peptide occupies residues 1 to 16; it reads MKILFVLISILYAVYC. The propeptide occupies 17–54; it reads FSSEEDVDSAYLANELEPVEDINSEQYAALEPKEEQER. 4 disulfide bridges follow: Cys-56-Cys-70, Cys-63-Cys-76, Cys-69-Cys-87, and Cys-78-Cys-85. The Agouti domain occupies 56 to 95; the sequence is CAGMGQDCKDDCDCCLNIATCNCWFGRYFCSCTFGDYQTC.

Belongs to the neurotoxin 05 (agouti) family. Contains 6 disulfide bonds. Expressed by the venom gland.

Its subcellular location is the secreted. The protein is U13-lycotoxin-Ls1f of Lycosa singoriensis (Wolf spider).